We begin with the raw amino-acid sequence, 378 residues long: Cytochrome b (378 aa).

Helical transmembrane passes span 34-54, 78-99, 114-134, and 179-199; these read FGSL…FLAM, WLLR…YLHV, WLIG…GYVL, and FFTF…IHLL. 2 residues coordinate heme b: histidine 84 and histidine 98. The heme b site is built by histidine 183 and histidine 197. Histidine 202 contributes to the a ubiquinone binding site. 4 consecutive transmembrane segments (helical) span residues 227 to 247, 289 to 309, 321 to 341, and 348 to 368; these read FKDI…VLIS, LGGV…PFYN, INQV…WIGA, and YVLI…VNPL.

The protein belongs to the cytochrome b family. As to quaternary structure, the main subunits of complex b-c1 are: cytochrome b, cytochrome c1 and the Rieske protein. It depends on heme b as a cofactor.

It is found in the mitochondrion inner membrane. Functionally, component of the ubiquinol-cytochrome c reductase complex (complex III or cytochrome b-c1 complex) that is part of the mitochondrial respiratory chain. The b-c1 complex mediates electron transfer from ubiquinol to cytochrome c. Contributes to the generation of a proton gradient across the mitochondrial membrane that is then used for ATP synthesis. The chain is Cytochrome b (mt:Cyt-b) from Drosophila sechellia (Fruit fly).